The primary structure comprises 156 residues: Transcription elongation factor GreA (156 aa).

The stretch at 2–78 (AKEIILTQEG…MISKAKLIED (77 aa)) forms a coiled coil.

This sequence belongs to the GreA/GreB family.

Necessary for efficient RNA polymerase transcription elongation past template-encoded arresting sites. The arresting sites in DNA have the property of trapping a certain fraction of elongating RNA polymerases that pass through, resulting in locked ternary complexes. Cleavage of the nascent transcript by cleavage factors such as GreA or GreB allows the resumption of elongation from the new 3'terminus. GreA releases sequences of 2 to 3 nucleotides. The protein is Transcription elongation factor GreA of Mesoplasma florum (strain ATCC 33453 / NBRC 100688 / NCTC 11704 / L1) (Acholeplasma florum).